Here is a 228-residue protein sequence, read N- to C-terminus: Probable septum site-determining protein MinC (228 aa).

It belongs to the MinC family. Interacts with MinD and FtsZ.

Functionally, cell division inhibitor that blocks the formation of polar Z ring septums. Rapidly oscillates between the poles of the cell to destabilize FtsZ filaments that have formed before they mature into polar Z rings. Prevents FtsZ polymerization. The protein is Probable septum site-determining protein MinC of Bacillus cytotoxicus (strain DSM 22905 / CIP 110041 / 391-98 / NVH 391-98).